A 495-amino-acid chain; its full sequence is MSESNELIEQRIQKIEELKKQGINPYPVRFFPDSKSKDIAEKFEKNPTGPETKFKLGGRLHSKRVMGKASFAHLKDNSGIIQLYATKDDLGETQYSIFKSLDLGDIIGLEGYLFKTQKGEITLHVTSVELLAKCIRPLPVVKEKDGVVYDAFADVEQRYRMRYVDLIVNDHVRDTFITRSKIVSEIRSFLTQEGFLEVETPMMQPIAGGAAARPFVTHHNTLDMQLFLRIAPELYLKRLIVGGMDRVFELNRNFRNEGISTKHNPEFTMMEAYMAFGDMSTMLDLTERLITHLAQKICGTLKIQYGKDLIDLSPPWKRTTYVDIIKEYSGIDFSQIISLEEAKKKASELKVDVSKCQTIWKVADEVFSEKAEPNLIQPIFITDYPKELSPLAKSNPDKPGYVERFEPYVAGREIGNAFTELNDPFDQKERFEDQVKQREAGDDEAFMMDEDYIRALEYGMPPTGGLGIGIDRLVMLLTNSHSIRDTILFPLMRPE.

Mg(2+)-binding residues include glutamate 406 and glutamate 413.

Belongs to the class-II aminoacyl-tRNA synthetase family. As to quaternary structure, homodimer. Requires Mg(2+) as cofactor.

The protein localises to the cytoplasm. It carries out the reaction tRNA(Lys) + L-lysine + ATP = L-lysyl-tRNA(Lys) + AMP + diphosphate. The chain is Lysine--tRNA ligase from Leptospira interrogans serogroup Icterohaemorrhagiae serovar Lai (strain 56601).